Reading from the N-terminus, the 128-residue chain is Holo-[acyl-carrier-protein] synthase (128 aa).

D8 and E58 together coordinate Mg(2+).

It belongs to the P-Pant transferase superfamily. AcpS family. Mg(2+) serves as cofactor.

Its subcellular location is the cytoplasm. It catalyses the reaction apo-[ACP] + CoA = holo-[ACP] + adenosine 3',5'-bisphosphate + H(+). Transfers the 4'-phosphopantetheine moiety from coenzyme A to a Ser of acyl-carrier-protein. The protein is Holo-[acyl-carrier-protein] synthase of Exiguobacterium sibiricum (strain DSM 17290 / CCUG 55495 / CIP 109462 / JCM 13490 / 255-15).